The sequence spans 137 residues: Fatty acid-binding protein homolog 8 (137 aa).

The short motif at 24 to 34 is the Nuclear localization signal element; the sequence is KEIGVGLLIRK.

This sequence belongs to the calycin superfamily. Fatty-acid binding protein (FABP) family. As to quaternary structure, monomer. In terms of tissue distribution, intestine.

It is found in the lysosome. Its subcellular location is the nucleus. Functionally, lysosomal lipid chaperone which binds to a wide range of unsaturated fatty acids, including high affinity binding to oleic acid and oleoylethanolamide, to transport them into the nucleus. As part of a lysosome-to-nucleus retrograde lipid signaling pathway, translocates into the nucleus where it activates the transcription of genes promoting longevity and activation of mitochondrial beta oxidation. The chain is Fatty acid-binding protein homolog 8 from Caenorhabditis elegans.